We begin with the raw amino-acid sequence, 536 residues long: Probable tyrosyl-DNA phosphodiesterase (536 aa).

Catalysis depends on H122, which acts as the Nucleophile. Residue K124 participates in substrate binding. An interaction with DNA region spans residues 315-318 (SMGS). H401 acts as the Proton donor/acceptor in catalysis. K403 serves as a coordination point for substrate.

This sequence belongs to the tyrosyl-DNA phosphodiesterase family.

The protein resides in the nucleus. Functionally, DNA repair enzyme that can remove a variety of covalent adducts from DNA through hydrolysis of a 3'-phosphodiester bond, giving rise to DNA with a free 3' phosphate. Catalyzes the hydrolysis of dead-end complexes between DNA and the topoisomerase I active site tyrosine residue. Hydrolyzes 3'-phosphoglycolates on protruding 3' ends on DNA double-strand breaks due to DNA damage by radiation and free radicals. Acts on blunt-ended double-strand DNA breaks and on single-stranded DNA. May have low 3'exonuclease activity and may be able to remove a single nucleoside from the 3'end of DNA and RNA molecules with 3'hydroxyl groups. Has no exonuclease activity towards DNA or RNA with a 3'phosphate. This chain is Probable tyrosyl-DNA phosphodiesterase, found in Schizosaccharomyces pombe (strain 972 / ATCC 24843) (Fission yeast).